Reading from the N-terminus, the 393-residue chain is Formate-dependent phosphoribosylglycinamide formyltransferase (393 aa).

N(1)-(5-phospho-beta-D-ribosyl)glycinamide is bound by residues 22–23 (EL) and E82. ATP-binding positions include R114, K155, 160–165 (SSGKGQ), 195–198 (EGFI), and E203. An ATP-grasp domain is found at 119–308 (RLAAEELGLP…EFALHARAIL (190 aa)). Mg(2+)-binding residues include E267 and E279. Residues D286, K356, and 363–364 (RR) contribute to the N(1)-(5-phospho-beta-D-ribosyl)glycinamide site.

It belongs to the PurK/PurT family. In terms of assembly, homodimer.

The catalysed reaction is N(1)-(5-phospho-beta-D-ribosyl)glycinamide + formate + ATP = N(2)-formyl-N(1)-(5-phospho-beta-D-ribosyl)glycinamide + ADP + phosphate + H(+). The protein operates within purine metabolism; IMP biosynthesis via de novo pathway; N(2)-formyl-N(1)-(5-phospho-D-ribosyl)glycinamide from N(1)-(5-phospho-D-ribosyl)glycinamide (formate route): step 1/1. Involved in the de novo purine biosynthesis. Catalyzes the transfer of formate to 5-phospho-ribosyl-glycinamide (GAR), producing 5-phospho-ribosyl-N-formylglycinamide (FGAR). Formate is provided by PurU via hydrolysis of 10-formyl-tetrahydrofolate. In Azotobacter vinelandii (strain DJ / ATCC BAA-1303), this protein is Formate-dependent phosphoribosylglycinamide formyltransferase.